A 357-amino-acid chain; its full sequence is Cinnamyl alcohol dehydrogenase 1 (357 aa).

Residue C47 coordinates Zn(2+). T49 serves as a coordination point for NADP(+). Zn(2+) contacts are provided by H69, E70, C100, C103, C106, C114, and C163. NADP(+)-binding positions include T167, G188–G193, S211–K216, T251, G275, and S298–I300.

It belongs to the zinc-containing alcohol dehydrogenase family. As to quaternary structure, homodimer. Zn(2+) is required as a cofactor. In terms of tissue distribution, expressed in leaves, mainly in peltate glands.

It catalyses the reaction (E)-cinnamyl alcohol + NADP(+) = (E)-cinnamaldehyde + NADPH + H(+). The enzyme catalyses (E)-coniferol + NADP(+) = (E)-coniferaldehyde + NADPH + H(+). It carries out the reaction (E)-sinapyl alcohol + NADP(+) = (E)-sinapaldehyde + NADPH + H(+). The catalysed reaction is (E)-4-coumaroyl alcohol + NADP(+) = (E)-4-coumaraldehyde + NADPH + H(+). It catalyses the reaction (E)-caffeyl alcohol + NADP(+) = (E)-caffeyl aldehyde + NADPH + H(+). It functions in the pathway aromatic compound metabolism; phenylpropanoid biosynthesis. Its activity is regulated as follows. 60% inhibition by 5 mM Ca(+), Mg(+) or Cu(+). In terms of biological role, involved in the production of citral, a mixture of geranial and neral with a strong lemony scent. Reversibly oxidizes geraniol to produce geranial at half the efficiency compared with its activity with cinnamyl alcohol. Does not use nerol and neral as substrates. The sequence is that of Cinnamyl alcohol dehydrogenase 1 (CAD1) from Ocimum basilicum (Sweet basil).